Consider the following 549-residue polypeptide: Probable protein kinase UbiB (549 aa).

In terms of domain architecture, Protein kinase spans 123–501 (DFDDTPLASA…QQKAHKSNYL (379 aa)). Residues 129 to 137 (LASASISQV) and K152 contribute to the ATP site. D287 functions as the Proton acceptor in the catalytic mechanism. The next 2 membrane-spanning stretches (helical) occupy residues 498–518 (SNYL…LLNQ) and 520–540 (ATLW…VLGW).

It belongs to the ABC1 family. UbiB subfamily.

The protein localises to the cell inner membrane. It functions in the pathway cofactor biosynthesis; ubiquinone biosynthesis [regulation]. In terms of biological role, is probably a protein kinase regulator of UbiI activity which is involved in aerobic coenzyme Q (ubiquinone) biosynthesis. The protein is Probable protein kinase UbiB of Shewanella pealeana (strain ATCC 700345 / ANG-SQ1).